A 160-amino-acid chain; its full sequence is SsrA-binding protein (160 aa).

The disordered stretch occupies residues 132 to 160 (KIHDKRDDMQKKDAQQEIARALKSSNRYE). The span at 135-146 (DKRDDMQKKDAQ) shows a compositional bias: basic and acidic residues.

It belongs to the SmpB family.

It is found in the cytoplasm. Functionally, required for rescue of stalled ribosomes mediated by trans-translation. Binds to transfer-messenger RNA (tmRNA), required for stable association of tmRNA with ribosomes. tmRNA and SmpB together mimic tRNA shape, replacing the anticodon stem-loop with SmpB. tmRNA is encoded by the ssrA gene; the 2 termini fold to resemble tRNA(Ala) and it encodes a 'tag peptide', a short internal open reading frame. During trans-translation Ala-aminoacylated tmRNA acts like a tRNA, entering the A-site of stalled ribosomes, displacing the stalled mRNA. The ribosome then switches to translate the ORF on the tmRNA; the nascent peptide is terminated with the 'tag peptide' encoded by the tmRNA and targeted for degradation. The ribosome is freed to recommence translation, which seems to be the essential function of trans-translation. The polypeptide is SsrA-binding protein (Leptospira borgpetersenii serovar Hardjo-bovis (strain JB197)).